Here is a 491-residue protein sequence, read N- to C-terminus: N-succinylglutamate 5-semialdehyde dehydrogenase (491 aa).

NAD(+) is bound at residue 223 to 228 (GSANTG). Active-site residues include Glu-246 and Cys-280.

This sequence belongs to the aldehyde dehydrogenase family. AstD subfamily.

It catalyses the reaction N-succinyl-L-glutamate 5-semialdehyde + NAD(+) + H2O = N-succinyl-L-glutamate + NADH + 2 H(+). Its pathway is amino-acid degradation; L-arginine degradation via AST pathway; L-glutamate and succinate from L-arginine: step 4/5. In terms of biological role, catalyzes the NAD-dependent reduction of succinylglutamate semialdehyde into succinylglutamate. In Photorhabdus laumondii subsp. laumondii (strain DSM 15139 / CIP 105565 / TT01) (Photorhabdus luminescens subsp. laumondii), this protein is N-succinylglutamate 5-semialdehyde dehydrogenase.